A 445-amino-acid polypeptide reads, in one-letter code: Branched-chain amino acid permease BraB (445 aa).

A run of 12 helical transmembrane segments spans residues 11–31, 45–65, 79–99, 122–142, 158–178, 192–212, 233–253, 275–295, 311–331, 339–359, 375–395, and 415–435; these read IIIG…IYPP, IGGF…AIAL, PVFG…LFAI, LSLL…ALNP, FTII…GLGA, FLEG…VVVV, AGVI…YLGA, YLFG…ACLT, LIPA…SLII, IIAF…VIIV, IACL…AAGF, and IGWV…TLFI.

It belongs to the branched chain amino acid transporter family.

It is found in the cell membrane. Branched-chain amino acid transport system which is involved in the uptake of isoleucine, valine and probably leucine. Together with BcaP and BrnQ, plays an important role in the activation of CodY, a branched-chain amino acid-responsive transcriptional regulator that controls the expression of several dozen transcription units in B.subtilis. The polypeptide is Branched-chain amino acid permease BraB (Bacillus subtilis (strain 168)).